The sequence spans 568 residues: Urease subunit alpha (568 aa).

Residues 130–568 (GGIDTHIHFI…LPMAQRYFLF (439 aa)) form the Urease domain. Ni(2+) is bound by residues His-135, His-137, and Lys-218. Lys-218 is modified (N6-carboxylysine). His-220 is a binding site for substrate. Residues His-247 and His-273 each coordinate Ni(2+). Residue His-321 is the Proton donor of the active site. Position 361 (Asp-361) interacts with Ni(2+).

Belongs to the metallo-dependent hydrolases superfamily. Urease alpha subunit family. Heterotrimer of UreA (gamma), UreB (beta) and UreC (alpha) subunits. Three heterotrimers associate to form the active enzyme. Ni cation serves as cofactor. Post-translationally, carboxylation allows a single lysine to coordinate two nickel ions.

It is found in the cytoplasm. The enzyme catalyses urea + 2 H2O + H(+) = hydrogencarbonate + 2 NH4(+). The protein operates within nitrogen metabolism; urea degradation; CO(2) and NH(3) from urea (urease route): step 1/1. This chain is Urease subunit alpha, found in Burkholderia mallei (strain NCTC 10247).